Consider the following 78-residue polypeptide: Translation initiation factor IF-1, chloroplastic (78 aa).

The S1-like domain occupies 1 to 72; the sequence is MEKQNLIDME…TKGRITYRLR (72 aa).

This sequence belongs to the IF-1 family. As to quaternary structure, component of the 30S ribosomal translation pre-initiation complex which assembles on the 30S ribosome in the order IF-2 and IF-3, IF-1 and N-formylmethionyl-tRNA(fMet); mRNA recruitment can occur at any time during PIC assembly.

The protein resides in the plastid. It localises to the chloroplast. Functionally, one of the essential components for the initiation of protein synthesis. Stabilizes the binding of IF-2 and IF-3 on the 30S subunit to which N-formylmethionyl-tRNA(fMet) subsequently binds. Helps modulate mRNA selection, yielding the 30S pre-initiation complex (PIC). Upon addition of the 50S ribosomal subunit IF-1, IF-2 and IF-3 are released leaving the mature 70S translation initiation complex. In Anthoceros angustus (Hornwort), this protein is Translation initiation factor IF-1, chloroplastic.